The following is a 523-amino-acid chain: Cytochrome P450 52-N1 (523 aa).

A helical membrane pass occupies residues Ala5–Ile25. Cys469 provides a ligand contact to heme.

It belongs to the cytochrome P450 family. Requires heme as cofactor.

The protein resides in the membrane. It carries out the reaction an omega-methyl-long-chain fatty acid + reduced [NADPH--hemoprotein reductase] + O2 = an omega-hydroxy-long-chain fatty acid + oxidized [NADPH--hemoprotein reductase] + H2O + H(+). It catalyses the reaction (9Z,12Z)-octadecadienoate + reduced [NADPH--hemoprotein reductase] + O2 = 18-hydroxy-(9Z,12Z)-octadecadienoate + oxidized [NADPH--hemoprotein reductase] + H2O + H(+). The catalysed reaction is (9Z)-octadecenoate + reduced [NADPH--hemoprotein reductase] + O2 = 18-hydroxy-(9Z)-octadecenoate + oxidized [NADPH--hemoprotein reductase] + H2O + H(+). The enzyme catalyses hexadecanoate + reduced [NADPH--hemoprotein reductase] + O2 = 16-hydroxyhexadecanoate + oxidized [NADPH--hemoprotein reductase] + H2O + H(+). It carries out the reaction (9Z)-hexadecenoate + reduced [NADPH--hemoprotein reductase] + O2 = (9Z)-16-hydroxyhexadec-9-enoate + oxidized [NADPH--hemoprotein reductase] + H2O + H(+). It catalyses the reaction octadecanoate + reduced [NADPH--hemoprotein reductase] + O2 = 18-hydroxyoctadecanoate + oxidized [NADPH--hemoprotein reductase] + H2O + H(+). Functionally, catalyzes the terminal (at the omega-position) hydroxylation of a fatty acid. Probably involved in alkane metabolism. Linoleic acid is the preferred substrate, but it acts on various other C-16, C-18 and C-20 saturated and unsaturated fatty acids, namely palmitic, palmitoleic, stearic, oleic, alpha-linoleic, arachidonic and myristic acid. This is Cytochrome P450 52-N1 from Starmerella bombicola (Yeast).